The following is a 111-amino-acid chain: X antigen family member 2 (111 aa).

Disordered stretches follow at residues 1–61 and 77–111; these read MSWR…AAEI and KTGDGCEGGTDVKGKILPKAEHFKMPEAGEGKSQV. Basic and acidic residues predominate over residues 86–111; it reads TDVKGKILPKAEHFKMPEAGEGKSQV.

Belongs to the GAGE family.

This chain is X antigen family member 2 (XAGE2), found in Homo sapiens (Human).